We begin with the raw amino-acid sequence, 398 residues long: 1-deoxy-D-xylulose 5-phosphate reductoisomerase (398 aa).

Positions 13, 14, 15, 16, 40, and 127 each coordinate NADPH. Lysine 128 serves as a coordination point for 1-deoxy-D-xylulose 5-phosphate. NADPH is bound at residue glutamate 129. A Mn(2+)-binding site is contributed by aspartate 153. The 1-deoxy-D-xylulose 5-phosphate site is built by serine 154, glutamate 155, serine 188, and histidine 211. Glutamate 155 contacts Mn(2+). Glycine 217 is a binding site for NADPH. 4 residues coordinate 1-deoxy-D-xylulose 5-phosphate: serine 224, asparagine 229, lysine 230, and glutamate 233. Glutamate 233 is a Mn(2+) binding site.

The protein belongs to the DXR family. Mg(2+) is required as a cofactor. Requires Mn(2+) as cofactor.

The enzyme catalyses 2-C-methyl-D-erythritol 4-phosphate + NADP(+) = 1-deoxy-D-xylulose 5-phosphate + NADPH + H(+). The protein operates within isoprenoid biosynthesis; isopentenyl diphosphate biosynthesis via DXP pathway; isopentenyl diphosphate from 1-deoxy-D-xylulose 5-phosphate: step 1/6. Its function is as follows. Catalyzes the NADPH-dependent rearrangement and reduction of 1-deoxy-D-xylulose-5-phosphate (DXP) to 2-C-methyl-D-erythritol 4-phosphate (MEP). This chain is 1-deoxy-D-xylulose 5-phosphate reductoisomerase, found in Cellvibrio japonicus (strain Ueda107) (Pseudomonas fluorescens subsp. cellulosa).